Reading from the N-terminus, the 67-residue chain is Large ribosomal subunit protein bL35 (67 aa).

Basic residues predominate over residues 1–16 (MPKMKTKSSAKKRFRV). Residues 1 to 23 (MPKMKTKSSAKKRFRVRPGGTVK) are disordered.

It belongs to the bacterial ribosomal protein bL35 family.

This chain is Large ribosomal subunit protein bL35, found in Variovorax paradoxus (strain S110).